Consider the following 444-residue polypeptide: MKYTPHTPDEVREMLSSLGLSSIEELFSDIPEEVKLKRPLNLPSGMSELEVKKHLANLAAKNGSADKYTVFLGAGVYDHYVPAVVNHILLRSEFYTAYTPYQAEMSQGVLQSIFEYQTMICELTGLDITNASMYDGGSALAEAALMAVSQTRRDKVLVLATVHPEYRSVVKTYTWGPEIEVVEVPYKSGTVDLEKLEELIDDKTAAVLVQHPNFFGQLEPVEEISRLIHAQKGLLVVAVDPISLGILKPPAEYGADIAVGDGQALGNGLAFGGPHLGFFAARKDLARRMPGRLVGLTTDKEGNRGFVLTLQAREQHIRREKATSNICSNQALNALAATVYLATVGKKGLKEIALQSLQKAHYAFERLIGEGYEPLFSGPFFKEFVVKVKNEEEITQKLLKHHILAGPGISRFYPELAPALMIAVTEKRTREEIDNLVEVLGGDR.

It belongs to the GcvP family. N-terminal subunit subfamily. In terms of assembly, the glycine cleavage system is composed of four proteins: P, T, L and H. In this organism, the P 'protein' is a heterodimer of two subunits.

It carries out the reaction N(6)-[(R)-lipoyl]-L-lysyl-[glycine-cleavage complex H protein] + glycine + H(+) = N(6)-[(R)-S(8)-aminomethyldihydrolipoyl]-L-lysyl-[glycine-cleavage complex H protein] + CO2. Functionally, the glycine cleavage system catalyzes the degradation of glycine. The P protein binds the alpha-amino group of glycine through its pyridoxal phosphate cofactor; CO(2) is released and the remaining methylamine moiety is then transferred to the lipoamide cofactor of the H protein. This is Probable glycine dehydrogenase (decarboxylating) subunit 1 from Carboxydothermus hydrogenoformans (strain ATCC BAA-161 / DSM 6008 / Z-2901).